The sequence spans 151 residues: Small ribosomal subunit protein uS15 (151 aa).

It belongs to the universal ribosomal protein uS15 family.

This Candida maltosa (Yeast) protein is Small ribosomal subunit protein uS15 (RPS13).